Here is a 432-residue protein sequence, read N- to C-terminus: Adenylosuccinate synthetase (432 aa).

Residues 13–19 (GDEGKGK) and 41–43 (GHT) contribute to the GTP site. Aspartate 14 acts as the Proton acceptor in catalysis. Residues aspartate 14 and glycine 41 each contribute to the Mg(2+) site. IMP-binding positions include 14–17 (DEGK), 39–42 (NAGH), threonine 130, arginine 144, glutamine 225, threonine 240, and arginine 306. Histidine 42 serves as the catalytic Proton donor. 302 to 308 (TVTGRAR) lines the substrate pocket. Residues arginine 308, 334–336 (KLD), and 416–418 (STG) contribute to the GTP site.

Belongs to the adenylosuccinate synthetase family. As to quaternary structure, homodimer. The cofactor is Mg(2+).

Its subcellular location is the cytoplasm. It carries out the reaction IMP + L-aspartate + GTP = N(6)-(1,2-dicarboxyethyl)-AMP + GDP + phosphate + 2 H(+). It participates in purine metabolism; AMP biosynthesis via de novo pathway; AMP from IMP: step 1/2. Functionally, plays an important role in the de novo pathway of purine nucleotide biosynthesis. Catalyzes the first committed step in the biosynthesis of AMP from IMP. This is Adenylosuccinate synthetase from Herminiimonas arsenicoxydans.